Reading from the N-terminus, the 125-residue chain is NADH dehydrogenase [ubiquinone] 1 beta subcomplex subunit 8, mitochondrial (125 aa).

The N-terminal 29 residues, 1–29, are a transit peptide targeting the mitochondrion; the sequence is MAGRLSGVASRIMGGNGVVARSVGSSLRQ. The chain crosses the membrane as a helical span at residues 78–98; that stretch reads ALAWLSGGLGFFVGLGLLAVL.

This sequence belongs to the complex I NDUFB8 subunit family. In terms of assembly, complex I is composed of at least 49 different subunits.

The protein localises to the mitochondrion inner membrane. In terms of biological role, accessory subunit of the mitochondrial membrane respiratory chain NADH dehydrogenase (Complex I), that is believed not to be involved in catalysis. Complex I functions in the transfer of electrons from NADH to the respiratory chain. The immediate electron acceptor for the enzyme is believed to be ubiquinone. The chain is NADH dehydrogenase [ubiquinone] 1 beta subcomplex subunit 8, mitochondrial from Arabidopsis thaliana (Mouse-ear cress).